The sequence spans 269 residues: Imidazoleglycerol-phosphate dehydratase 2, chloroplastic (269 aa).

A chloroplast-targeting transit peptide spans 1-51; sequence MTTAPFLFPSLSRLHSARASSFPKPPVGSGAGVAFPARPYGSSLRLRSSVM. Residues Glu83, 109 to 117, 135 to 139, Arg161, and Arg183 contribute to the substrate site; these read HMLDQLASH and HHSNE. Residues His109, His135, His136, and Glu139 each contribute to the Mn(2+) site. 4 residues coordinate Mn(2+): His207, His231, His232, and Glu235. Substrate-binding positions include 231–239 and 261–263; these read HHIIEATFK and SSK.

It belongs to the imidazoleglycerol-phosphate dehydratase family. Requires Mn(2+) as cofactor.

It is found in the plastid. It localises to the chloroplast. It catalyses the reaction D-erythro-1-(imidazol-4-yl)glycerol 3-phosphate = 3-(imidazol-4-yl)-2-oxopropyl phosphate + H2O. Its pathway is amino-acid biosynthesis; L-histidine biosynthesis; L-histidine from 5-phospho-alpha-D-ribose 1-diphosphate: step 6/9. The sequence is that of Imidazoleglycerol-phosphate dehydratase 2, chloroplastic from Triticum aestivum (Wheat).